Here is a 428-residue protein sequence, read N- to C-terminus: Glutamate-1-semialdehyde 2,1-aminomutase (428 aa).

At Lys267 the chain carries N6-(pyridoxal phosphate)lysine.

The protein belongs to the class-III pyridoxal-phosphate-dependent aminotransferase family. HemL subfamily. Homodimer. Pyridoxal 5'-phosphate serves as cofactor.

It is found in the cytoplasm. It carries out the reaction (S)-4-amino-5-oxopentanoate = 5-aminolevulinate. It functions in the pathway porphyrin-containing compound metabolism; protoporphyrin-IX biosynthesis; 5-aminolevulinate from L-glutamyl-tRNA(Glu): step 2/2. This is Glutamate-1-semialdehyde 2,1-aminomutase from Trichlorobacter lovleyi (strain ATCC BAA-1151 / DSM 17278 / SZ) (Geobacter lovleyi).